Consider the following 627-residue polypeptide: Protein zyg-11 homolog A (627 aa).

LRR repeat units lie at residues 123 to 146 (LPNL…LSCK), 203 to 227 (LPNL…SFLQ), and 409 to 432 (ITSI…LIMA).

Belongs to the zyg-11 family.

Functionally, probably acts as a target recruitment subunit in an E3 ubiquitin ligase complex ZYGA-CUL2-elongin BC. The chain is Protein zyg-11 homolog A (Zyg11a) from Mus musculus (Mouse).